The sequence spans 339 residues: Annexin A2 (339 aa).

Serine 2 is subject to N-acetylserine. An S100A10-binding site region spans residues 2 to 24 (STVHEILSKLSLEGDHSLPPSAY). Phosphotyrosine; by SRC is present on tyrosine 24. A Phosphothreonine; by PKC modification is found at threonine 26. Annexin repeat units lie at residues 33–104 (FDAD…GLLK), 105–176 (TPSQ…ALAK), 189–261 (ELID…NLVQ), and 265–336 (NKQL…NLCG).

It belongs to the annexin family. As to quaternary structure, heterotetramer containing 2 light chains of S100A10/p11 and 2 heavy chains of ANXA2/p36.

It localises to the secreted. The protein resides in the extracellular space. Its subcellular location is the extracellular matrix. The protein localises to the basement membrane. In terms of biological role, calcium-regulated membrane-binding protein whose affinity for calcium is greatly enhanced by anionic phospholipids. It binds two calcium ions with high affinity. In Gallus gallus (Chicken), this protein is Annexin A2 (ANXA2).